We begin with the raw amino-acid sequence, 236 residues long: Small ribosomal subunit protein uS5 (236 aa).

The S5 DRBM domain maps to 61 to 124; the sequence is ENQEILDIAL…NYAKLNIIEI (64 aa).

This sequence belongs to the universal ribosomal protein uS5 family. Part of the 30S ribosomal subunit. Contacts protein S4.

Its function is as follows. With S4 and S12 plays an important role in translational accuracy. This chain is Small ribosomal subunit protein uS5, found in Pyrococcus abyssi (strain GE5 / Orsay).